Reading from the N-terminus, the 23-residue chain is Brevinin-1SE (23 aa).

A disulfide bridge links C17 with C23.

Expressed by the skin glands.

It localises to the secreted. Its function is as follows. Mast cell degranulating peptide. Causes histamine release from rat peritoneal mast cells in vitro. Has antibacterial activity against the Gram-negative bacterium E.coli K12 and Gram-positive bacterium M.luteus NCT C2665. The protein is Brevinin-1SE of Lithobates sevosus (Dusky gopher frog).